Reading from the N-terminus, the 215-residue chain is Pyrrolidone-carboxylate peptidase (215 aa).

Active-site residues include Glu-78, Cys-141, and His-165.

This sequence belongs to the peptidase C15 family. As to quaternary structure, homotetramer.

Its subcellular location is the cytoplasm. The catalysed reaction is Release of an N-terminal pyroglutamyl group from a polypeptide, the second amino acid generally not being Pro.. Its function is as follows. Removes 5-oxoproline from various penultimate amino acid residues except L-proline. The polypeptide is Pyrrolidone-carboxylate peptidase (Lactobacillus johnsonii (strain CNCM I-12250 / La1 / NCC 533)).